We begin with the raw amino-acid sequence, 309 residues long: MLNNQQIHQSVLINEVIHNLNINPCGNYLDLTAGFAGHSQKILEKLTTGTLTINDVDKESINFCQKLFFKNNNVVIIHDNFANFPVHLKQLSITKFDGILMDLGVSSHQLNQPNRGFSFKNDGPIDMRMDQSNQKNTALTVLKNLTEQKLSLILKKYGDIKHPKPIAIGLKKAVQTEKNLTTTQLAKVVKECATGFEKYQSRNYLAKVFQAIRIYLNDEITNLKTALTFIPNLLKNNSRFLVIVFHSIEEKIVRNFIAKLTSFIQPEALPIKLTPAYQLITKKPILPSQKELELNPRSRSAKLFVIQKN.

Residues 36–38 (AGH), D55, F81, D102, and Q109 each bind S-adenosyl-L-methionine.

This sequence belongs to the methyltransferase superfamily. RsmH family.

Its subcellular location is the cytoplasm. The enzyme catalyses cytidine(1402) in 16S rRNA + S-adenosyl-L-methionine = N(4)-methylcytidine(1402) in 16S rRNA + S-adenosyl-L-homocysteine + H(+). Its function is as follows. Specifically methylates the N4 position of cytidine in position 1402 (C1402) of 16S rRNA. The polypeptide is Ribosomal RNA small subunit methyltransferase H (Mycoplasma genitalium (strain ATCC 33530 / DSM 19775 / NCTC 10195 / G37) (Mycoplasmoides genitalium)).